The following is a 1553-amino-acid chain: Sterol 3-beta-glucosyltransferase (1553 aa).

Polar residues-rich tracts occupy residues 1 to 10 (MASSQPTSSG) and 25 to 36 (LNTETSSSQHRA). 2 disordered regions span residues 1-106 (MASS…NEED) and 189-270 (PASA…GLAP). Basic and acidic residues predominate over residues 90-100 (LPDRLKDNGKE). Residues 211-222 (LLQSVPSLSRLS) are compositionally biased toward low complexity. Over residues 223–232 (SSHKSKKTKQ) the composition is skewed to basic residues. 2 consecutive GRAM domains span residues 323 to 370 (KKLK…HLPK) and 464 to 495 (SLQRVIFRSHNDGDSVKISIPIRNILDIEEAQ). One can recognise a PH domain in the interval 374–470 (EIAKSGYLSK…WVKSLQRVIF (97 aa)). Disordered stretches follow at residues 542–569 (SPEDSGANDAPKGTGGDRAIGDNLGSPR), 611–662 (FSRR…FDDP), and 805–825 (GKKHYDHPAGRRTEREDVEDD). Basic and acidic residues predominate over residues 633-650 (LHGDGRRSFSKPRHEPHA). Residues 651 to 662 (STDSYAQSFDDP) show a composition bias toward polar residues. The segment covering 810–819 (DHPAGRRTER) has biased composition (basic and acidic residues). Residues 834-900 (ARFQAHFALP…KDIETVDKEK (67 aa)) form the GRAM 3 domain. UDP-alpha-D-glucose is bound by residues S1020, R1021, D1023, A1328, H1330, H1343, S1346, G1347, T1348, D1367, and Q1368. 2 disordered regions span residues 1446–1504 (KHQS…GSMS) and 1527–1553 (PALGSRVLSSPPTSPGAMRGAGGVKYV). Residues 1466–1488 (PEDDQGQAAEEDDIDADDEEEES) show a composition bias toward acidic residues.

This sequence belongs to the glycosyltransferase 28 family.

Its subcellular location is the cytoplasm. It is found in the preautophagosomal structure membrane. It catalyses the reaction a sterol + UDP-alpha-D-glucose = a sterol 3-beta-D-glucoside + UDP + H(+). The catalysed reaction is ergosterol + UDP-alpha-D-glucose = ergosteryl 3-beta-D-glucoside + UDP + H(+). Functionally, sterol glycosyltransferase responsible for the glycosylation of ergosterol to form ergosterol-glucoside. This chain is Sterol 3-beta-glucosyltransferase (apg-12), found in Neurospora crassa (strain ATCC 24698 / 74-OR23-1A / CBS 708.71 / DSM 1257 / FGSC 987).